A 389-amino-acid chain; its full sequence is DEAD-box ATP-dependent RNA helicase CshC (389 aa).

A Q motif motif is present at residues 1 to 26 (MIKDMQPFLQQAWEKAGFKELTEIQK). A Helicase ATP-binding domain is found at 29 to 199 (IPTILEGQDV…RDLAVEPQLV (171 aa)). 42–49 (SPTGTGKT) contacts ATP. Positions 147-150 (DEFD) match the DEAD box motif. Residues 209–379 (LVEHTYIICE…TKPKAPKKKK (171 aa)) form the Helicase C-terminal domain. The interval 368 to 389 (VETKPKAPKKKKPAFTGKKKPR) is disordered. The segment covering 373 to 389 (KAPKKKKPAFTGKKKPR) has biased composition (basic residues).

It carries out the reaction ATP + H2O = ADP + phosphate + H(+). Its function is as follows. DEAD-box RNA helicase. Probably has an RNA-dependent ATPase activity and a 3' to 5' RNA helicase activity that uses the energy of ATP hydrolysis to destabilize and unwind short RNA duplexes. The polypeptide is DEAD-box ATP-dependent RNA helicase CshC (cshC) (Bacillus cereus (strain ATCC 14579 / DSM 31 / CCUG 7414 / JCM 2152 / NBRC 15305 / NCIMB 9373 / NCTC 2599 / NRRL B-3711)).